Here is a 274-residue protein sequence, read N- to C-terminus: NADPH-dependent 7-cyano-7-deazaguanine reductase (274 aa).

80-82 (VES) is a substrate binding site. 82 to 83 (SK) serves as a coordination point for NADPH. C181 serves as the catalytic Thioimide intermediate. D188 functions as the Proton donor in the catalytic mechanism. Residue 220-221 (HE) coordinates substrate. An NADPH-binding site is contributed by 249-250 (RG).

Belongs to the GTP cyclohydrolase I family. QueF type 2 subfamily. In terms of assembly, homodimer.

The protein localises to the cytoplasm. The catalysed reaction is 7-aminomethyl-7-carbaguanine + 2 NADP(+) = 7-cyano-7-deazaguanine + 2 NADPH + 3 H(+). It participates in tRNA modification; tRNA-queuosine biosynthesis. Catalyzes the NADPH-dependent reduction of 7-cyano-7-deazaguanine (preQ0) to 7-aminomethyl-7-deazaguanine (preQ1). This chain is NADPH-dependent 7-cyano-7-deazaguanine reductase, found in Paraburkholderia xenovorans (strain LB400).